The primary structure comprises 327 residues: GDP-mannose transporter (327 aa).

The Cytoplasmic segment spans residues 1 to 4 (MESS). The chain crosses the membrane as a helical span at residues 5-25 (LAAIANSGPISIFSYCVSSIL). Residues 26–36 (MTVTNKYVLSG) lie on the Lumenal side of the membrane. A helical transmembrane segment spans residues 37-57 (FSFNMNFLLLAVQSIVCIVTI). The Cytoplasmic portion of the chain corresponds to 58–78 (GSLKSFGVITYRQFNKEEARK). Residues 79 to 93 (WSPIAVLLVIMIYTS) form a helical membrane-spanning segment. At 94–102 (SKALQYLSI) the chain is on the lumenal side. Residues 103–125 (PVYTIFKNLTIILIAYGEVLWFG) form a helical membrane-spanning segment. Residues 126-131 (GKVTTM) are Cytoplasmic-facing. The chain crosses the membrane as a helical span at residues 132 to 149 (ALSSFLLMVFSSVVAWYG). Residues 150–163 (DEAVSGSGNESFIA) are Lumenal-facing. N-linked (GlcNAc...) asparagine glycosylation occurs at Asn158. The chain crosses the membrane as a helical span at residues 164–184 (LYLGYFWMATNCFASAAFVLI). At 185-207 (MRKRIKLTNFKDFDTMYYNNLLS) the chain is on the cytoplasmic side. The chain crosses the membrane as a helical span at residues 208–228 (IPILLASSIIFEDWSAENLAV). At 229-238 (NFPSDNRTAT) the chain is on the lumenal side. The N-linked (GlcNAc...) asparagine glycan is linked to Asn234. A helical membrane pass occupies residues 239–259 (IAAMVLSGASSVGISYCSAWC). Topologically, residues 260–266 (VRVTSST) are cytoplasmic. Residues 267-289 (TYSMVGALNKLPIALSGLVFFPA) form a helical membrane-spanning segment. The Lumenal portion of the chain corresponds to 290–292 (AVN). A helical membrane pass occupies residues 293-312 (FWSVASIFVGFAAGLVYAVA). At 313-327 (KQRQQKENVSLPSSK) the chain is on the cytoplasmic side.

The protein belongs to the TPT transporter family. SLC35D subfamily. In terms of assembly, homooligomer.

The protein resides in the golgi apparatus membrane. It localises to the cytoplasmic vesicle membrane. It is found in the endoplasmic reticulum membrane. In terms of biological role, involved in the import of GDP-mannose from the cytoplasm into the Golgi lumen. This is GDP-mannose transporter (VRG4) from Scheffersomyces stipitis (strain ATCC 58785 / CBS 6054 / NBRC 10063 / NRRL Y-11545) (Yeast).